Here is a 130-residue protein sequence, read N- to C-terminus: Protein ApaG (130 aa).

Residues 3–127 (RATTRKIQVT…FSLDVPHMAR (125 aa)) enclose the ApaG domain.

The protein is Protein ApaG of Azorhizobium caulinodans (strain ATCC 43989 / DSM 5975 / JCM 20966 / LMG 6465 / NBRC 14845 / NCIMB 13405 / ORS 571).